The primary structure comprises 595 residues: Laccase-18 (595 aa).

A signal peptide spans 1–29 (MEKLSTAASLFCVVVAATALAMAVVGGEA). Plastocyanin-like domains lie at 37 to 153 (MVHE…PRNG) and 162 to 316 (KDVP…YAGA). 2 N-linked (GlcNAc...) asparagine glycosylation sites follow: Asn-42 and Asn-48. Residues His-87 and His-89 each contribute to the Cu cation site. Asn-121 carries N-linked (GlcNAc...) asparagine glycosylation. Residues His-132 and His-134 each contribute to the Cu cation site. Asn-206, Asn-345, Asn-382, Asn-402, Asn-409, Asn-439, and Asn-470 each carry an N-linked (GlcNAc...) asparagine glycan. Residues 429–571 (DFPVRPPRPF…ATAFIVEDGP (143 aa)) form the Plastocyanin-like 3 domain. Asn-488, His-491, His-493, His-550, Cys-551, His-552, His-556, and Met-561 together coordinate Cu cation. Residues 570-595 (GPTPETSLPPPPPEFKRCGTNGLSQP) are disordered.

The protein belongs to the multicopper oxidase family. Cu cation is required as a cofactor.

The protein resides in the secreted. It is found in the extracellular space. It localises to the apoplast. The enzyme catalyses 4 hydroquinone + O2 = 4 benzosemiquinone + 2 H2O. Lignin degradation and detoxification of lignin-derived products. The chain is Laccase-18 (LAC18) from Oryza sativa subsp. japonica (Rice).